The following is a 155-amino-acid chain: MTQHSSAQNAVDLYTDGACSGNPGPGGWGVVLRYGHHEREMYGGETATTNNKMELTAVIEGLAALTRPVPLVRIHTDSTYVLKGITEWMRGWKRNGWLTSAKQPVKNADLWRRLDQECGRHGEITWEWVKGHAGHPENERADKLACKGRDEAKKS.

The region spanning 7-150 (AQNAVDLYTD…ADKLACKGRD (144 aa)) is the RNase H type-1 domain. Asp16, Glu54, Asp77, and Asp142 together coordinate Mg(2+).

Belongs to the RNase H family. In terms of assembly, monomer. It depends on Mg(2+) as a cofactor.

It is found in the cytoplasm. It catalyses the reaction Endonucleolytic cleavage to 5'-phosphomonoester.. In terms of biological role, endonuclease that specifically degrades the RNA of RNA-DNA hybrids. This chain is Ribonuclease H, found in Saccharopolyspora erythraea (strain ATCC 11635 / DSM 40517 / JCM 4748 / NBRC 13426 / NCIMB 8594 / NRRL 2338).